A 352-amino-acid chain; its full sequence is Biotin synthase (352 aa).

Positions N44–K262 constitute a Radical SAM core domain. Residues C59, C63, and C66 each coordinate [4Fe-4S] cluster. C103, C134, C194, and R266 together coordinate [2Fe-2S] cluster.

This sequence belongs to the radical SAM superfamily. Biotin synthase family. Homodimer. It depends on [4Fe-4S] cluster as a cofactor. The cofactor is [2Fe-2S] cluster.

The catalysed reaction is (4R,5S)-dethiobiotin + (sulfur carrier)-SH + 2 reduced [2Fe-2S]-[ferredoxin] + 2 S-adenosyl-L-methionine = (sulfur carrier)-H + biotin + 2 5'-deoxyadenosine + 2 L-methionine + 2 oxidized [2Fe-2S]-[ferredoxin]. It functions in the pathway cofactor biosynthesis; biotin biosynthesis; biotin from 7,8-diaminononanoate: step 2/2. Its function is as follows. Catalyzes the conversion of dethiobiotin (DTB) to biotin by the insertion of a sulfur atom into dethiobiotin via a radical-based mechanism. This Pseudomonas putida (strain GB-1) protein is Biotin synthase.